Here is a 216-residue protein sequence, read N- to C-terminus: Uracil phosphoribosyltransferase (216 aa).

5-phospho-alpha-D-ribose 1-diphosphate-binding positions include Arg85, Arg110, and Asp135–Ser143. Residues Ile200 and Gly205 to Ala207 each bind uracil. A 5-phospho-alpha-D-ribose 1-diphosphate-binding site is contributed by Asp206.

This sequence belongs to the UPRTase family. It depends on Mg(2+) as a cofactor.

It carries out the reaction UMP + diphosphate = 5-phospho-alpha-D-ribose 1-diphosphate + uracil. Its pathway is pyrimidine metabolism; UMP biosynthesis via salvage pathway; UMP from uracil: step 1/1. With respect to regulation, allosterically activated by GTP. Its function is as follows. Catalyzes the conversion of uracil and 5-phospho-alpha-D-ribose 1-diphosphate (PRPP) to UMP and diphosphate. This chain is Uracil phosphoribosyltransferase, found in Ralstonia pickettii (strain 12J).